A 198-amino-acid polypeptide reads, in one-letter code: DnaJ homolog subfamily C member 5 (198 aa).

A phosphoserine mark is found at Ser8, Ser10, Ser12, and Ser15. Residues 13 to 82 (GESLYHVLGL…RNIYDKYGSL (70 aa)) enclose the J domain. Tyr17 bears the Phosphotyrosine mark. An N6-acetyllysine modification is found at Lys56. At Ser151 the chain carries Phosphoserine.

In terms of assembly, oligomers. Homodimer. Interacts with the chaperone complex consisting of HSC70 and SGTA. Interacts with ZDHHC13 (via ANK repeats). Interacts with ZDHHC17 (via ANK repeats). Interacts with SYT1, SYT5 and SYT7, and with SYT9, forming a complex with SNAP25. In terms of processing, ser-10 phosphorylation induces an order-to-disorder transition triggering the interaction with Lys-58. This conformational switch modulates DNAJC5's cellular functions by reducing binding to syntaxin and synaptogamin without altering HSC70 interactions. Palmitoylated. Could be palmitoylated by DHHC3, DHHC7, DHHC15 and DHHC17. Palmitoylation occurs probably in the cysteine-rich domain and regulates DNAJC5 membrane attachment. Expressed in pancreas, kidney, skeletal muscle, liver, lung, placenta, brain and heart.

The protein localises to the cytoplasm. The protein resides in the cytosol. Its subcellular location is the membrane. It is found in the cytoplasmic vesicle. It localises to the secretory vesicle. The protein localises to the chromaffin granule membrane. The protein resides in the melanosome. Its subcellular location is the cell membrane. Acts as a general chaperone in regulated exocytosis. Acts as a co-chaperone for the SNARE protein SNAP-25. Involved in the calcium-mediated control of a late stage of exocytosis. May have an important role in presynaptic function. May be involved in calcium-dependent neurotransmitter release at nerve endings. The sequence is that of DnaJ homolog subfamily C member 5 from Homo sapiens (Human).